Here is a 258-residue protein sequence, read N- to C-terminus: GPI alpha-1,4-mannosyltransferase I, stabilizing subunit (258 aa).

An N-terminal signal peptide occupies residues 1 to 21; sequence MAARVAAVRAAAWLLLGAATG. Over 22–230 the chain is Lumenal; the sequence is LTRGPAAAFT…PVGLTVHTSL (209 aa). N103 carries an N-linked (GlcNAc...) asparagine glycan. A helical transmembrane segment spans residues 231–251; sequence VCSVTLLITILCSTLILVAVF. The Cytoplasmic portion of the chain corresponds to 252–258; it reads KYGHFSL.

Belongs to the PIGX family. As to quaternary structure, part of the glycosylphosphatidylinositol-mannosyltransferase I complex that is composed of PIGM and PIGX. Interacts with PIGM; PIGX stabilizes PIGM.

It is found in the endoplasmic reticulum membrane. It functions in the pathway glycolipid biosynthesis; glycosylphosphatidylinositol-anchor biosynthesis. Functionally, stabilizing subunit of the glycosylphosphatidylinositol-mannosyltransferase I complex which catalyzes the transfer of the first mannose, via an alpha-1,4 bond from a dolichol-phosphate-mannose (Dol-P-Man) to the glucosaminyl acyl phosphatidylinositol (GlcN-(acyl)PI) intermediate to generate alpha-D-Man-(1-&gt;4)-alpha-D-GlcN-(1-&gt;6)-(1-radyl,2-acyl-sn-glycero-3-phospho)-2-acyl-inositol and participates in the sixth step of the glycosylphosphatidylinositol-anchor biosynthesis. Probably acts by stabilizing the mannosyltransferase PIGM. The chain is GPI alpha-1,4-mannosyltransferase I, stabilizing subunit from Homo sapiens (Human).